The primary structure comprises 1193 residues: Laminin subunit gamma-2 (1193 aa).

The first 21 residues, M1–A21, serve as a signal peptide directing secretion. Intrachain disulfides connect C28–C37, C30–C53, C56–C65, C68–C81, C84–C96, C86–C102, C104–C113, C116–C128, C139–C150, C141–C155, C157–C166, and C169–C184. Laminin EGF-like domains follow at residues C28–P83, C84–Q130, and C139–Q186. A Laminin EGF-like 4; first part domain is found at C187–C196. The Laminin IV type A domain occupies Q213–Q381. Residues N342 and N362 are each glycosylated (N-linked (GlcNAc...) asparagine). The Laminin EGF-like 4; second part domain occupies C382–P415. Laminin EGF-like domains lie at C416–P461, C462–P516, and C517–A572. Cystine bridges form between C462–C470, C464–C481, C484–C493, C496–C514, C517–C531, C519–C538, C541–C550, C553–C570, C573–C585, C575–C591, and C593–C602. The region spanning C573–C602 is the Laminin EGF-like 8; truncated domain. Positions E603–Q1193 are domain II and I. Residues A611–D718 are a coiled coil. O-linked (Xyl...) (chondroitin sulfate) serine glycosylation is found at S803 and S805. 2 coiled-coil regions span residues A811–M1076 and E1117–Q1193. N942 and N1033 each carry an N-linked (GlcNAc...) asparagine glycan.

Laminin is a complex glycoprotein, consisting of three different polypeptide chains (alpha, beta, gamma), which are bound to each other by disulfide bonds into a cross-shaped molecule comprising one long and three short arms with globules at each end. Gamma-2 is a subunit of laminin-5 (laminin-332 or epiligrin/kalinin/nicein). O-glycosylated; contains chondroitin sulfate (CS). CS attachment is on either Ser-803 or Ser-805. In terms of tissue distribution, the large variant is expressed only in specific epithelial cells of embryonic and neonatal tissues. In 17-week old embryo the small variant is found in cerebral cortex, lung, and distal tubes of kidney, but not in epithelia except for distal tubuli.

It is found in the secreted. The protein resides in the extracellular space. The protein localises to the extracellular matrix. It localises to the basement membrane. Binding to cells via a high affinity receptor, laminin is thought to mediate the attachment, migration and organization of cells into tissues during embryonic development by interacting with other extracellular matrix components. Ladsin exerts cell-scattering activity toward a wide variety of cells, including epithelial, endothelial, and fibroblastic cells. In Homo sapiens (Human), this protein is Laminin subunit gamma-2 (LAMC2).